The following is a 335-amino-acid chain: Methionine import ATP-binding protein MetN 1 (335 aa).

The region spanning 2-242 (IEFHNVHKTY…PQHPTTRRFV (241 aa)) is the ABC transporter domain. 38–45 (GHSGAGKS) is a binding site for ATP.

The protein belongs to the ABC transporter superfamily. Methionine importer (TC 3.A.1.24) family. In terms of assembly, the complex is composed of two ATP-binding proteins (MetN), two transmembrane proteins (MetI) and a solute-binding protein (MetQ).

It is found in the cell inner membrane. The catalysed reaction is L-methionine(out) + ATP + H2O = L-methionine(in) + ADP + phosphate + H(+). It catalyses the reaction D-methionine(out) + ATP + H2O = D-methionine(in) + ADP + phosphate + H(+). Part of the ABC transporter complex MetNIQ involved in methionine import. Responsible for energy coupling to the transport system. In Pseudomonas savastanoi pv. phaseolicola (strain 1448A / Race 6) (Pseudomonas syringae pv. phaseolicola (strain 1448A / Race 6)), this protein is Methionine import ATP-binding protein MetN 1.